The following is a 312-amino-acid chain: Photosystem I assembly protein Ycf4 (312 aa).

3 helical membrane passes run 42–62, 91–111, and 113–133; these read WAFIVCLGSIGFLLTGISSYF, IILFFPQGLVMCFYGILGLFL, and FYLWFSIFLNIGAGFNEIYIY.

This sequence belongs to the Ycf4 family.

The protein resides in the plastid. It localises to the chloroplast thylakoid membrane. Functionally, seems to be required for the assembly of the photosystem I complex. In Pleurastrum terricola (Filamentous green alga), this protein is Photosystem I assembly protein Ycf4.